The sequence spans 236 residues: Large ribosomal subunit protein uL1 (236 aa).

This sequence belongs to the universal ribosomal protein uL1 family. Part of the 50S ribosomal subunit.

Functionally, binds directly to 23S rRNA. The L1 stalk is quite mobile in the ribosome, and is involved in E site tRNA release. Its function is as follows. Protein L1 is also a translational repressor protein, it controls the translation of the L11 operon by binding to its mRNA. The chain is Large ribosomal subunit protein uL1 from Sorangium cellulosum (strain So ce56) (Polyangium cellulosum (strain So ce56)).